Consider the following 72-residue polypeptide: Translation initiation factor IF-1 (72 aa).

The region spanning 1–72 (MPKEEVLEFP…TKGRITYRFK (72 aa)) is the S1-like domain.

The protein belongs to the IF-1 family. In terms of assembly, component of the 30S ribosomal translation pre-initiation complex which assembles on the 30S ribosome in the order IF-2 and IF-3, IF-1 and N-formylmethionyl-tRNA(fMet); mRNA recruitment can occur at any time during PIC assembly.

Its subcellular location is the cytoplasm. One of the essential components for the initiation of protein synthesis. Stabilizes the binding of IF-2 and IF-3 on the 30S subunit to which N-formylmethionyl-tRNA(fMet) subsequently binds. Helps modulate mRNA selection, yielding the 30S pre-initiation complex (PIC). Upon addition of the 50S ribosomal subunit IF-1, IF-2 and IF-3 are released leaving the mature 70S translation initiation complex. The polypeptide is Translation initiation factor IF-1 (Chelativorans sp. (strain BNC1)).